Reading from the N-terminus, the 590-residue chain is Proline--tRNA ligase (590 aa).

The protein belongs to the class-II aminoacyl-tRNA synthetase family. ProS type 1 subfamily. In terms of assembly, homodimer.

The protein localises to the cytoplasm. It catalyses the reaction tRNA(Pro) + L-proline + ATP = L-prolyl-tRNA(Pro) + AMP + diphosphate. Functionally, catalyzes the attachment of proline to tRNA(Pro) in a two-step reaction: proline is first activated by ATP to form Pro-AMP and then transferred to the acceptor end of tRNA(Pro). As ProRS can inadvertently accommodate and process non-cognate amino acids such as alanine and cysteine, to avoid such errors it has two additional distinct editing activities against alanine. One activity is designated as 'pretransfer' editing and involves the tRNA(Pro)-independent hydrolysis of activated Ala-AMP. The other activity is designated 'posttransfer' editing and involves deacylation of mischarged Ala-tRNA(Pro). The misacylated Cys-tRNA(Pro) is not edited by ProRS. The sequence is that of Proline--tRNA ligase from Clavibacter sepedonicus (Clavibacter michiganensis subsp. sepedonicus).